The sequence spans 419 residues: Serine/threonine-protein kinase Kist (419 aa).

The region spanning 23–304 is the Protein kinase domain; that stretch reads WQVQSRLGSG…AEMALCSPFF (282 aa). Residues 29 to 37 and K54 contribute to the ATP site; that span reads LGSGSSASV. Catalysis depends on proton acceptor residues D141 and D158. In terms of domain architecture, RRM spans 324–406; sequence RLLNVLDDDY…KFVVATFYPL (83 aa).

It belongs to the protein kinase superfamily. Ser/Thr protein kinase family. In terms of assembly, interacts with stathmin, PAM and CDKN1B/p27Kip1.

Its subcellular location is the nucleus. The catalysed reaction is L-seryl-[protein] + ATP = O-phospho-L-seryl-[protein] + ADP + H(+). It carries out the reaction L-threonyl-[protein] + ATP = O-phospho-L-threonyl-[protein] + ADP + H(+). Functionally, upon serum stimulation, phosphorylates CDKN1B/p27Kip1, thus controlling CDKN1B subcellular location and cell cycle progression in G1 phase. May be involved in trafficking and/or processing of RNA. The polypeptide is Serine/threonine-protein kinase Kist (UHMK1) (Pongo abelii (Sumatran orangutan)).